The following is a 123-amino-acid chain: MPTVNQLIRKPRQAQVKRNKVPALQENPQKRGVCTRVYTTTPKKPNSALRKVAKIRLTNGFEVIGYIPGEGHNLQEHSVVMIRGGRVKDLPGVRYHIIRGVLDTQGVKNRKQRRSKYGAKRPK.

A 3-methylthioaspartic acid modification is found at Asp-89.

The protein belongs to the universal ribosomal protein uS12 family. In terms of assembly, part of the 30S ribosomal subunit. Contacts proteins S8 and S17. May interact with IF1 in the 30S initiation complex.

In terms of biological role, with S4 and S5 plays an important role in translational accuracy. Its function is as follows. Interacts with and stabilizes bases of the 16S rRNA that are involved in tRNA selection in the A site and with the mRNA backbone. Located at the interface of the 30S and 50S subunits, it traverses the body of the 30S subunit contacting proteins on the other side and probably holding the rRNA structure together. The combined cluster of proteins S8, S12 and S17 appears to hold together the shoulder and platform of the 30S subunit. The chain is Small ribosomal subunit protein uS12 from Sinorhizobium medicae (strain WSM419) (Ensifer medicae).